The sequence spans 271 residues: Cobalt import ATP-binding protein CbiO (271 aa).

Residues 2–236 enclose the ABC transporter domain; that stretch reads LATSDLWFRY…TEAMEHAGLT (235 aa). 34-41 lines the ATP pocket; that stretch reads GANGCGKS.

Belongs to the ABC transporter superfamily. Cobalt importer (TC 3.A.1.18.1) family. Forms an energy-coupling factor (ECF) transporter complex composed of an ATP-binding protein (A component, CbiO), a transmembrane protein (T component, CbiQ) and 2 possible substrate-capture proteins (S components, CbiM and CbiN) of unknown stoichimetry.

The protein resides in the cell inner membrane. The protein operates within cofactor biosynthesis; adenosylcobalamin biosynthesis. Part of the energy-coupling factor (ECF) transporter complex CbiMNOQ involved in cobalt import. Presumably responsible for energy coupling to the transport system. The sequence is that of Cobalt import ATP-binding protein CbiO from Salmonella paratyphi A (strain ATCC 9150 / SARB42).